The following is a 1482-amino-acid chain: Cystic fibrosis transmembrane conductance regulator (1482 aa).

The Cytoplasmic portion of the chain corresponds to 1–77; the sequence is MQRSPLEKAS…KLINALQRCF (77 aa). Residues 78-98 traverse the membrane as a helical segment; the sequence is FWRFTFYGILLYLGEVTKAIQ. In terms of domain architecture, ABC transmembrane type-1 1 spans 81-365; that stretch reads FTFYGILLYL…WAVQTWYDSL (285 aa). The Extracellular portion of the chain corresponds to 99–122; the sequence is PLLLGRIIASYDPDNKMERSIAIY. A helical transmembrane segment spans residues 123-146; that stretch reads LGIGLCLLFIMRTLLLHPAIFGLH. Residues 147 to 195 are Cytoplasmic-facing; the sequence is HIGMQMRIALFSLIYKKTLKLSSRVLDKISIGQLVSLLSNNLNKFDEGL. A helical membrane pass occupies residues 196-216; it reads ALAHFVWIAPLQVMLLMGLLW. At 217 to 222 the chain is on the extracellular side; that stretch reads ELLQAS. The chain crosses the membrane as a helical span at residues 223 to 243; that stretch reads AFCGLAFLIVLALLQAGLGRM. Over 244 to 298 the chain is Cytoplasmic; that stretch reads MMKYRDQRAGKINERLVITSEMIENIQSVKAYCWEEAMEKMIENLRQTELRLTRK. The helical transmembrane segment at 299–319 threads the bilayer; it reads AAYVRYVNSSAFFFSGFFVVF. Topologically, residues 320–339 are extracellular; it reads LSVLPYALIKGIILRKIFTT. Residues 340-358 traverse the membrane as a helical segment; the sequence is ISFCIVLRMAVTRQFPWAV. The Cytoplasmic portion of the chain corresponds to 359 to 859; it reads QTWYDSLGAI…YLRYITVHKN (501 aa). Residues tryptophan 401, 458–465, and glutamine 493 each bind ATP; that span reads GSTGAGKT. One can recognise an ABC transporter 1 domain in the interval 423–646; the sequence is SGDNRLFFSN…RPDFSSKLMG (224 aa). The S-palmitoyl cysteine moiety is linked to residue cysteine 524. A phosphoserine mark is found at serine 549 and serine 660. Residues 654-832 are disordered R region; that stretch reads SAERRNSILT…EEINEEDLKE (179 aa). Serine 670 is modified (phosphoserine; by PKA). The residue at position 686 (serine 686) is a Phosphoserine. Residue lysine 688 forms a Glycyl lysine isopeptide (Lys-Gly) (interchain with G-Cter in ubiquitin) linkage. Serine 700 and serine 712 each carry phosphoserine. A Phosphothreonine modification is found at threonine 717. Serine 737, serine 768, serine 791, serine 796, and serine 814 each carry phosphoserine. Residues 860–880 traverse the membrane as a helical segment; sequence LIFVLIWCLVIFLAEVAASLV. The ABC transmembrane type-1 2 domain maps to 860–1156; sequence LIFVLIWCLV…AVNSSIDVDS (297 aa). The Extracellular portion of the chain corresponds to 881 to 919; sequence AFWLIEKTRPQDKGNSTRSTNNTSPVIITSTSAFYMFYI. Residues asparagine 895 and asparagine 901 are each glycosylated (N-linked (GlcNAc...) asparagine). The discontinuously helical transmembrane segment at 920–940 threads the bilayer; it reads YVGVADSLLALGFLRGLPLVH. Topologically, residues 941-991 are cytoplasmic; sequence TLITVSKILHQKMLHSVLHAPMSTLNTLKAGAILNRFSKDIAILDDLLPLT. A helical membrane pass occupies residues 992-1012; sequence IFDFIQLVLIVIGAVVVVSIL. The Extracellular portion of the chain corresponds to 1013-1014; that stretch reads KP. The helical transmembrane segment at 1015-1035 threads the bilayer; sequence YIFLAAVPVIIAFVILRAYFL. Topologically, residues 1036-1096 are cytoplasmic; it reads QTSQQLKQLE…TATWFLYLST (61 aa). The chain crosses the membrane as a helical span at residues 1097–1117; the sequence is LRWFQMRIEMIFVVFFVAVTF. Over 1118–1131 the chain is Extracellular; sequence ISILTTGEGEGTVG. Residues 1132–1152 traverse the membrane as a helical segment; it reads IILTLAMNIMSTLQWAVNSSI. Topologically, residues 1153-1482 are cytoplasmic; that stretch reads DVDSLMRSVS…AEEEVQDTRL (330 aa). One can recognise an ABC transporter 2 domain in the interval 1212 to 1445; sequence ITVKDLTAKY…KSLFQQAISP (234 aa). Residues tyrosine 1221 and 1246–1253 contribute to the ATP site; that span reads GRTGSGKS. The tract at residues 1388-1482 is interaction with GORASP2; it reads RALKQAFADC…AEEEVQDTRL (95 aa). The S-palmitoyl cysteine moiety is linked to residue cysteine 1397. Phosphoserine is present on residues serine 1446 and serine 1458. The disordered stretch occupies residues 1454–1482; sequence QRSSSKHRSRAQITALKEEAEEEVQDTRL. A compositionally biased stretch (acidic residues) spans 1472–1482; that stretch reads EAEEEVQDTRL. Positions 1480–1482 match the PDZ-binding motif; that stretch reads TRL.

This sequence belongs to the ABC transporter superfamily. ABCC family. CFTR transporter (TC 3.A.1.202) subfamily. Monomer; does not require oligomerization for channel activity. May form oligomers in the membrane. Interacts with SLC26A3, SLC26A6 and NHERF1. Interacts with SHANK2. Interacts with MYO6. Interacts (via C-terminus) with GOPC (via PDZ domain); this promotes CFTR internalization and thereby decreases channel activity. Interacts with SLC4A7 through NHERF1. Found in a complex with MYO5B and RAB11A. Interacts with ANO1. Interacts with SLC26A8. Interacts with AHCYL1; the interaction increases CFTR activity. Interacts with CSE1L. The core-glycosylated form interacts with GORASP2 (via PDZ GRASP-type 1 domain) in respone to ER stress. Interacts with MARCHF2; the interaction leads to CFTR ubiqtuitination and degradation. Interacts with ADGRG2. N-glycosylated. Post-translationally, phosphorylated; cAMP treatment promotes phosphorylation and activates the channel. Dephosphorylation decreases the ATPase activity (in vitro). Phosphorylation at PKA sites activates the channel. Phosphorylation at PKC sites enhances the response to phosphorylation by PKA. Phosphorylated by AMPK; this inhibits channel activity. In terms of processing, ubiquitinated, leading to its degradation in the lysosome. Deubiquitination by USP10 in early endosomes enhances its endocytic recycling to the cell membrane. Ubiquitinated by RNF185 during ER stress. Ubiquitinated by MARCHF2.

The protein resides in the apical cell membrane. Its subcellular location is the early endosome membrane. It is found in the cell membrane. It localises to the recycling endosome membrane. The protein localises to the endoplasmic reticulum membrane. The protein resides in the nucleus. It catalyses the reaction ATP + H2O + closed Cl(-) channel = ADP + phosphate + open Cl(-) channel.. The enzyme catalyses chloride(in) = chloride(out). The catalysed reaction is hydrogencarbonate(in) = hydrogencarbonate(out). It carries out the reaction ATP + H2O = ADP + phosphate + H(+). Epithelial ion channel that plays an important role in the regulation of epithelial ion and water transport and fluid homeostasis. Mediates the transport of chloride ions across the cell membrane. Possesses an intrinsic ATPase activity and utilizes ATP to gate its channel; the passive flow of anions through the channel is gated by cycles of ATP binding and hydrolysis by the ATP-binding domains. The ion channel is also permeable to HCO(3)(-); selectivity depends on the extracellular chloride concentration. Exerts its function also by modulating the activity of other ion channels and transporters. Contributes to the regulation of the pH and the ion content of the epithelial fluid layer. Modulates the activity of the epithelial sodium channel (ENaC) complex, in part by regulating the cell surface expression of the ENaC complex. May regulate bicarbonate secretion and salvage in epithelial cells by regulating the transporter SLC4A7. Can inhibit the chloride channel activity of ANO1. Plays a role in the chloride and bicarbonate homeostasis during sperm epididymal maturation and capacitation. The chain is Cystic fibrosis transmembrane conductance regulator from Rhinolophus ferrumequinum (Greater horseshoe bat).